The primary structure comprises 190 residues: Cancer-related nucleoside-triphosphatase homolog (190 aa).

ATP is bound by residues 9–16 (GPPGVGKT) and 109–116 (VCIIDEIG). The residue at position 165 (Lys165) is an N6-acetyllysine.

This sequence belongs to the THEP1 NTPase family. As to quaternary structure, monomer.

The enzyme catalyses a ribonucleoside 5'-triphosphate + H2O = a ribonucleoside 5'-diphosphate + phosphate + H(+). It catalyses the reaction 5-methyl-UTP + H2O = 5-methyl-UDP + phosphate + H(+). The catalysed reaction is CTP + H2O = CDP + phosphate + H(+). It carries out the reaction ATP + H2O = ADP + phosphate + H(+). The enzyme catalyses GTP + H2O = GDP + phosphate + H(+). Has nucleotide phosphatase activity towards ATP, GTP, CTP, TTP and UTP. Hydrolyzes nucleoside diphosphates with lower efficiency. This is Cancer-related nucleoside-triphosphatase homolog from Mus musculus (Mouse).